The following is a 62-amino-acid chain: UPF0434 protein Rleg2_3773 (62 aa).

It belongs to the UPF0434 family.

The protein is UPF0434 protein Rleg2_3773 of Rhizobium leguminosarum bv. trifolii (strain WSM2304).